A 396-amino-acid chain; its full sequence is Acetate kinase (396 aa).

N8 serves as a coordination point for Mg(2+). K15 provides a ligand contact to ATP. R89 is a substrate binding site. D146 serves as the catalytic Proton donor/acceptor. Residues 206 to 210 (HIGNG), 283 to 285 (DMR), and 331 to 335 (GMGEN) each bind ATP. E383 contacts Mg(2+).

Belongs to the acetokinase family. Homodimer. The cofactor is Mg(2+). It depends on Mn(2+) as a cofactor.

The protein localises to the cytoplasm. It catalyses the reaction acetate + ATP = acetyl phosphate + ADP. Its pathway is metabolic intermediate biosynthesis; acetyl-CoA biosynthesis; acetyl-CoA from acetate: step 1/2. Catalyzes the formation of acetyl phosphate from acetate and ATP. Can also catalyze the reverse reaction. The polypeptide is Acetate kinase (Streptococcus uberis (strain ATCC BAA-854 / 0140J)).